The following is a 161-amino-acid chain: Cyclic pyranopterin monophosphate synthase (161 aa).

Substrate contacts are provided by residues 75-77 and 113-114; these read LCH and ME. The active site involves aspartate 128.

Belongs to the MoaC family. As to quaternary structure, homohexamer; trimer of dimers.

The catalysed reaction is (8S)-3',8-cyclo-7,8-dihydroguanosine 5'-triphosphate = cyclic pyranopterin phosphate + diphosphate. It participates in cofactor biosynthesis; molybdopterin biosynthesis. In terms of biological role, catalyzes the conversion of (8S)-3',8-cyclo-7,8-dihydroguanosine 5'-triphosphate to cyclic pyranopterin monophosphate (cPMP). The polypeptide is Cyclic pyranopterin monophosphate synthase (Cronobacter sakazakii (strain ATCC BAA-894) (Enterobacter sakazakii)).